Reading from the N-terminus, the 191-residue chain is Heme-binding protein 1 (191 aa).

The protein belongs to the HEBP family. Monomer.

It localises to the cytoplasm. May bind free porphyrinogens that may be present in the cell and thus facilitate removal of these potentially toxic compound. Binds with a high affinity to one molecule of heme or porphyrins. It binds metalloporphyrins, free porphyrins and N-methylprotoporphyrin with similar affinities. This Bos taurus (Bovine) protein is Heme-binding protein 1 (HEBP1).